The following is a 168-amino-acid chain: G/U mismatch-specific DNA glycosylase (168 aa).

This sequence belongs to the uracil-DNA glycosylase (UDG) superfamily. TDG/mug family. In terms of assembly, binds DNA as a monomer.

It is found in the cytoplasm. It catalyses the reaction Specifically hydrolyzes mismatched double-stranded DNA and polynucleotides, releasing free uracil.. Its function is as follows. Excises ethenocytosine and uracil, which can arise by alkylation or deamination of cytosine, respectively, from the corresponding mispairs with guanine in ds-DNA. It is capable of hydrolyzing the carbon-nitrogen bond between the sugar-phosphate backbone of the DNA and the mispaired base. The complementary strand guanine functions in substrate recognition. Required for DNA damage lesion repair in stationary-phase cells. The chain is G/U mismatch-specific DNA glycosylase from Shigella dysenteriae serotype 1 (strain Sd197).